A 111-amino-acid chain; its full sequence is Cell division protein FtsB (111 aa).

Residues 1-3 (MRL) lie on the Cytoplasmic side of the membrane. The chain crosses the membrane as a helical span at residues 4–21 (LFLVLLVLLGLIQYPLWL). Over 22–111 (GKGGWFKVWD…PGQTASAPRR (90 aa)) the chain is Periplasmic. Residues 31–62 (DLQRQVAAQHETNDGLRARNAALEAEVRDLAT) adopt a coiled-coil conformation. A disordered region spans residues 88–111 (VPPGTPVPQPAPGAPGQTASAPRR). The span at 90–100 (PGTPVPQPAPG) shows a compositional bias: pro residues. A compositionally biased stretch (low complexity) spans 101–111 (APGQTASAPRR).

The protein belongs to the FtsB family. As to quaternary structure, part of a complex composed of FtsB, FtsL and FtsQ.

It localises to the cell inner membrane. Essential cell division protein. May link together the upstream cell division proteins, which are predominantly cytoplasmic, with the downstream cell division proteins, which are predominantly periplasmic. This is Cell division protein FtsB from Bordetella petrii (strain ATCC BAA-461 / DSM 12804 / CCUG 43448).